A 130-amino-acid polypeptide reads, in one-letter code: MKRRTARERAMQALYQMDITGELEPKVAVENTLDEGEETNEFLESLVVGFVENKEVIDEAIRQNLKKWKLERISIVDRSILRVAVYEMKYMEEIPHNVTINEAIEIAKTFGDEESRRFINGVLSNIKDTL.

It belongs to the NusB family.

Its function is as follows. Involved in transcription antitermination. Required for transcription of ribosomal RNA (rRNA) genes. Binds specifically to the boxA antiterminator sequence of the ribosomal RNA (rrn) operons. This chain is Transcription antitermination protein NusB, found in Bacillus anthracis (strain A0248).